The primary structure comprises 535 residues: Probable anion transporter 2, chloroplastic (535 aa).

A chloroplast-targeting transit peptide spans 1–95 (MASIRSCVSV…RERAVAAMCS (95 aa)). The next 12 membrane-spanning stretches (helical) occupy residues 125–145 (VVAL…VMSV), 160–180 (FLGI…MVGG), 191–211 (VMAG…WAAS), 215–235 (IMLL…FPTM), 254–274 (ISMG…PIIM), 279–299 (LAGT…VWLF), 343–363 (IEMW…FVLL), 381–401 (AAWF…VAGA), 413–433 (VALV…VSLL), 443–463 (VAAV…AGYF), 483–503 (GIGT…VQWL), and 504–524 (GSFQ…TVFY).

It belongs to the major facilitator superfamily. Sodium/anion cotransporter (TC 2.A.1.14) family.

It is found in the plastid. The protein resides in the chloroplast membrane. Its function is as follows. Probable anion transporter. The chain is Probable anion transporter 2, chloroplastic (PHT4;2) from Oryza sativa subsp. japonica (Rice).